A 212-amino-acid chain; its full sequence is Ribosomal RNA small subunit methyltransferase G (212 aa).

Residues G80, L85, A131–E132, and R146 each bind S-adenosyl-L-methionine.

This sequence belongs to the methyltransferase superfamily. RNA methyltransferase RsmG family.

Its subcellular location is the cytoplasm. The catalysed reaction is guanosine(527) in 16S rRNA + S-adenosyl-L-methionine = N(7)-methylguanosine(527) in 16S rRNA + S-adenosyl-L-homocysteine. Functionally, specifically methylates the N7 position of guanine in position 527 of 16S rRNA. This Xanthomonas oryzae pv. oryzae (strain KACC10331 / KXO85) protein is Ribosomal RNA small subunit methyltransferase G.